The chain runs to 477 residues: Ubiquitin carboxyl-terminal hydrolase 7 (477 aa).

Positions 2-77 constitute a Ubiquitin-like domain; it reads LTVSVKWQKK…LMMMGTADEI (76 aa). One can recognise a USP domain in the interval 104 to 473; sequence AGLVNLGNTC…MAYIVMYKAR (370 aa). Cys113 functions as the Nucleophile in the catalytic mechanism. A calmodulin-binding region spans residues 171-190; sequence MPFWMVLQKKYPQFAQLHNG. Residues 364–401 are disordered; the sequence is QASAKSSSKGDDVKMTDAEGSSNQSGESSTGDQQEGAS. Residues 371–380 are compositionally biased toward basic and acidic residues; the sequence is SKGDDVKMTD. Polar residues predominate over residues 382–399; sequence EGSSNQSGESSTGDQQEG. His425 serves as the catalytic Proton acceptor.

Belongs to the peptidase C19 family. Interacts with calmodulin (CaM).

The enzyme catalyses Thiol-dependent hydrolysis of ester, thioester, amide, peptide and isopeptide bonds formed by the C-terminal Gly of ubiquitin (a 76-residue protein attached to proteins as an intracellular targeting signal).. Functionally, recognizes and hydrolyzes the peptide bond at the C-terminal Gly of ubiquitin. Involved in the processing of poly-ubiquitin precursors as well as that of ubiquitinated proteins. The protein is Ubiquitin carboxyl-terminal hydrolase 7 (UBP7) of Arabidopsis thaliana (Mouse-ear cress).